Reading from the N-terminus, the 795-residue chain is Phenylalanine--tRNA ligase beta subunit (795 aa).

The 110-residue stretch at 39 to 148 folds into the tRNA-binding domain; sequence KSEFHGVVVG…KETLVGINVY (110 aa). One can recognise a B5 domain in the interval 400-475; sequence HKNNTIRLHH…RIYEYNNVHL (76 aa). The Mg(2+) site is built by Asp453, Asp459, and Asp463. Residues 701-794 form the FDX-ACB domain; sequence SKFPTVRRDI…LQKKFQAVLR (94 aa).

Belongs to the phenylalanyl-tRNA synthetase beta subunit family. Type 1 subfamily. As to quaternary structure, tetramer of two alpha and two beta subunits. The cofactor is Mg(2+).

The protein localises to the cytoplasm. The catalysed reaction is tRNA(Phe) + L-phenylalanine + ATP = L-phenylalanyl-tRNA(Phe) + AMP + diphosphate + H(+). This is Phenylalanine--tRNA ligase beta subunit (pheT) from Buchnera aphidicola subsp. Acyrthosiphon pisum (strain APS) (Acyrthosiphon pisum symbiotic bacterium).